A 293-amino-acid polypeptide reads, in one-letter code: Phosphatidylserine decarboxylase proenzyme (293 aa).

Active-site charge relay system; for autoendoproteolytic cleavage activity residues include Asp90, His147, and Ser254. Catalysis depends on Ser254, which acts as the Schiff-base intermediate with substrate; via pyruvic acid; for decarboxylase activity. Residue Ser254 is modified to Pyruvic acid (Ser); by autocatalysis.

This sequence belongs to the phosphatidylserine decarboxylase family. PSD-B subfamily. Prokaryotic type I sub-subfamily. Heterodimer of a large membrane-associated beta subunit and a small pyruvoyl-containing alpha subunit. It depends on pyruvate as a cofactor. In terms of processing, is synthesized initially as an inactive proenzyme. Formation of the active enzyme involves a self-maturation process in which the active site pyruvoyl group is generated from an internal serine residue via an autocatalytic post-translational modification. Two non-identical subunits are generated from the proenzyme in this reaction, and the pyruvate is formed at the N-terminus of the alpha chain, which is derived from the carboxyl end of the proenzyme. The autoendoproteolytic cleavage occurs by a canonical serine protease mechanism, in which the side chain hydroxyl group of the serine supplies its oxygen atom to form the C-terminus of the beta chain, while the remainder of the serine residue undergoes an oxidative deamination to produce ammonia and the pyruvoyl prosthetic group on the alpha chain. During this reaction, the Ser that is part of the protease active site of the proenzyme becomes the pyruvoyl prosthetic group, which constitutes an essential element of the active site of the mature decarboxylase.

The protein localises to the cell membrane. The catalysed reaction is a 1,2-diacyl-sn-glycero-3-phospho-L-serine + H(+) = a 1,2-diacyl-sn-glycero-3-phosphoethanolamine + CO2. It functions in the pathway phospholipid metabolism; phosphatidylethanolamine biosynthesis; phosphatidylethanolamine from CDP-diacylglycerol: step 2/2. Functionally, catalyzes the formation of phosphatidylethanolamine (PtdEtn) from phosphatidylserine (PtdSer). In Yersinia pseudotuberculosis serotype O:1b (strain IP 31758), this protein is Phosphatidylserine decarboxylase proenzyme.